A 529-amino-acid polypeptide reads, in one-letter code: Corneodesmosin (529 aa).

An N-terminal signal peptide occupies residues 1 to 32 (MGSSRAPWMGRVGGHGMMALLLAGLLLPGTLA). 2 disordered regions span residues 38-248 (FSDP…SVSG) and 383-492 (GSTG…SSAG). Low complexity-rich tracts occupy residues 58-83 (GKGD…SARS), 90-100 (GSSSGSSIAQG), 111-175 (GYSQ…NGSA), 189-231 (PSQP…SGGP), 392-408 (SPSS…SSSS), and 426-441 (PGTG…QSSG). N-linked (GlcNAc...) asparagine glycosylation is present at asparagine 172. The segment covering 449 to 467 (GSKSSSSGHPCMSVSSLTL) has biased composition (polar residues).

Exclusively expressed in skin.

The protein localises to the secreted. Its function is as follows. Important for the epidermal barrier integrity. This is Corneodesmosin (CDSN) from Homo sapiens (Human).